The chain runs to 174 residues: Shikimate kinase (174 aa).

15–20 (GTGKST) serves as a coordination point for ATP. Ser-19 is a Mg(2+) binding site. Substrate-binding residues include Asp-37, Arg-61, and Gly-82. Arg-120 is an ATP binding site. Residue Arg-138 participates in substrate binding.

This sequence belongs to the shikimate kinase family. Monomer. Mg(2+) serves as cofactor.

The protein localises to the cytoplasm. The catalysed reaction is shikimate + ATP = 3-phosphoshikimate + ADP + H(+). It participates in metabolic intermediate biosynthesis; chorismate biosynthesis; chorismate from D-erythrose 4-phosphate and phosphoenolpyruvate: step 5/7. Catalyzes the specific phosphorylation of the 3-hydroxyl group of shikimic acid using ATP as a cosubstrate. This chain is Shikimate kinase, found in Staphylococcus aureus (strain Mu3 / ATCC 700698).